A 232-amino-acid polypeptide reads, in one-letter code: N-(5'-phosphoribosyl)anthranilate isomerase (232 aa).

It belongs to the TrpF family.

The enzyme catalyses N-(5-phospho-beta-D-ribosyl)anthranilate = 1-(2-carboxyphenylamino)-1-deoxy-D-ribulose 5-phosphate. Its pathway is amino-acid biosynthesis; L-tryptophan biosynthesis; L-tryptophan from chorismate: step 3/5. This is N-(5'-phosphoribosyl)anthranilate isomerase (TRP1) from Wickerhamomyces anomalus (Yeast).